The following is a 129-amino-acid chain: Large ribosomal subunit protein uL22 (129 aa).

This sequence belongs to the universal ribosomal protein uL22 family. As to quaternary structure, part of the 50S ribosomal subunit.

Functionally, this protein binds specifically to 23S rRNA; its binding is stimulated by other ribosomal proteins, e.g. L4, L17, and L20. It is important during the early stages of 50S assembly. It makes multiple contacts with different domains of the 23S rRNA in the assembled 50S subunit and ribosome. The globular domain of the protein is located near the polypeptide exit tunnel on the outside of the subunit, while an extended beta-hairpin is found that lines the wall of the exit tunnel in the center of the 70S ribosome. This Brucella suis biovar 1 (strain 1330) protein is Large ribosomal subunit protein uL22.